Consider the following 144-residue polypeptide: Large ribosomal subunit protein uL24 (144 aa).

A disordered region spans residues 1-22 (MKFNKMVSSDRGKNRKRHFNAP). Residues 13 to 22 (KNRKRHFNAP) show a composition bias toward basic residues.

This sequence belongs to the universal ribosomal protein uL24 family.

This Littorina littorea (Common periwinkle) protein is Large ribosomal subunit protein uL24 (RPL26).